A 307-amino-acid chain; its full sequence is NAD kinase (307 aa).

The active-site Proton acceptor is aspartate 85. NAD(+) contacts are provided by residues 85–86 (DG), arginine 90, 159–160 (NE), aspartate 189, and 200–205 (TAYAFS).

The protein belongs to the NAD kinase family. The cofactor is a divalent metal cation.

It localises to the cytoplasm. The enzyme catalyses NAD(+) + ATP = ADP + NADP(+) + H(+). Functionally, involved in the regulation of the intracellular balance of NAD and NADP, and is a key enzyme in the biosynthesis of NADP. Catalyzes specifically the phosphorylation on 2'-hydroxyl of the adenosine moiety of NAD to yield NADP. The chain is NAD kinase from Mycobacterium bovis (strain ATCC BAA-935 / AF2122/97).